The chain runs to 457 residues: Bifunctional protein GlmU (457 aa).

Residues 1-229 (MSNSAKSVVI…HSEMEGVNNR (229 aa)) form a pyrophosphorylase region. UDP-N-acetyl-alpha-D-glucosamine-binding positions include 11–14 (LAAG), K25, Q76, 81–82 (GT), 103–105 (YGD), G140, E154, N169, and N227. D105 is a Mg(2+) binding site. N227 provides a ligand contact to Mg(2+). The linker stretch occupies residues 230–250 (LQLAALERIYQTEQAERLLLE). The N-acetyltransferase stretch occupies residues 251–457 (GVMLLDPARF…GWKRPVKKKQ (207 aa)). R333 and K351 together coordinate UDP-N-acetyl-alpha-D-glucosamine. The Proton acceptor role is filled by H363. The UDP-N-acetyl-alpha-D-glucosamine site is built by Y366 and N377. Acetyl-CoA-binding positions include A380, 386–387 (NY), S405, A423, and R440.

This sequence in the N-terminal section; belongs to the N-acetylglucosamine-1-phosphate uridyltransferase family. In the C-terminal section; belongs to the transferase hexapeptide repeat family. In terms of assembly, homotrimer. Requires Mg(2+) as cofactor.

It localises to the cytoplasm. The enzyme catalyses alpha-D-glucosamine 1-phosphate + acetyl-CoA = N-acetyl-alpha-D-glucosamine 1-phosphate + CoA + H(+). It carries out the reaction N-acetyl-alpha-D-glucosamine 1-phosphate + UTP + H(+) = UDP-N-acetyl-alpha-D-glucosamine + diphosphate. It functions in the pathway nucleotide-sugar biosynthesis; UDP-N-acetyl-alpha-D-glucosamine biosynthesis; N-acetyl-alpha-D-glucosamine 1-phosphate from alpha-D-glucosamine 6-phosphate (route II): step 2/2. The protein operates within nucleotide-sugar biosynthesis; UDP-N-acetyl-alpha-D-glucosamine biosynthesis; UDP-N-acetyl-alpha-D-glucosamine from N-acetyl-alpha-D-glucosamine 1-phosphate: step 1/1. It participates in bacterial outer membrane biogenesis; LPS lipid A biosynthesis. In terms of biological role, catalyzes the last two sequential reactions in the de novo biosynthetic pathway for UDP-N-acetylglucosamine (UDP-GlcNAc). The C-terminal domain catalyzes the transfer of acetyl group from acetyl coenzyme A to glucosamine-1-phosphate (GlcN-1-P) to produce N-acetylglucosamine-1-phosphate (GlcNAc-1-P), which is converted into UDP-GlcNAc by the transfer of uridine 5-monophosphate (from uridine 5-triphosphate), a reaction catalyzed by the N-terminal domain. This Proteus mirabilis (strain HI4320) protein is Bifunctional protein GlmU.